Here is a 251-residue protein sequence, read N- to C-terminus: Probable transcriptional regulatory protein cgR_1708 (251 aa).

Residues 1-22 (MAGHSKWATTKHKKAANDAKRG) are disordered.

It belongs to the TACO1 family.

It is found in the cytoplasm. The sequence is that of Probable transcriptional regulatory protein cgR_1708 from Corynebacterium glutamicum (strain R).